The following is a 41-amino-acid chain: Large ribosomal subunit protein bL36 (41 aa).

It belongs to the bacterial ribosomal protein bL36 family.

This is Large ribosomal subunit protein bL36 from Beijerinckia indica subsp. indica (strain ATCC 9039 / DSM 1715 / NCIMB 8712).